The sequence spans 1237 residues: Anion exchange protein 2 (1237 aa).

The disordered stretch occupies residues 1-238 (MSSAPRRPAS…YNLQERRRIG (238 aa)). The Cytoplasmic portion of the chain corresponds to 1-703 (MSSAPRRPAS…SDFRDALDPQ (703 aa)). Composition is skewed to basic and acidic residues over residues 38–48 (LRTLGVERFEE) and 57–74 (GGEE…EYHR). 2 stretches are compositionally biased toward basic residues: residues 75-84 (QSSHHIHHPL) and 93-109 (RRRK…RRRP). 6 positions are modified to phosphoserine: S112, S131, S144, S170, S172, and S239. Positions 119 to 132 (TIEEGEEDEEEASE) are enriched in acidic residues. T253 carries the post-translational modification Phosphothreonine. K270 is subject to N6-methyllysine. The disordered stretch occupies residues 285 to 316 (VRKNAKGSTQAAREGREPGPTPRARPRAPHKP). S439 is modified (phosphoserine). The segment at 445–466 (SLLGHHHAQGTESDPHVTEPLI) is disordered. Transmembrane regions (helical) follow at residues 704-727 (CLAA…GLLG), 733-770 (LIGV…LLVF), 790-812 (VWIG…SFLV), and 822-843 (IFAF…IKIF). The interval 704-1237 (CLAAVIFIYF…DEYNEMPMPV (534 aa)) is membrane (anion exchange). Topologically, residues 844–896 (QEHPLHGCSGSNDSEAGSSSSSNMTWATTILVPDNSSASGQSGQEKPRGQPNT) are extracellular. Residues N855, N866, and N878 are each glycosylated (N-linked (GlcNAc...) asparagine). A helical transmembrane segment spans residues 897 to 914 (ALLSLVLMAGTFFIAFFL). The Cytoplasmic portion of the chain corresponds to 915-929 (RKFKNSRFFPGRIRR). Helical transmembrane passes span 930–950 (VIGD…DYSI), 984–1006 (PFPV…LIFM), 1032–1053 (LLLI…LAAA), 1087–1132 (VTGL…IQFY), and 1159–1195 (MHLF…TVPL). A lipid anchor (S-palmitoyl cysteine) is attached at C1169.

It belongs to the anion exchanger (TC 2.A.31) family. As to expression, expressed in the choroid plexus epithelium (at protein level). Expressed in the parotid gland and sublingual salivary gland acinar cells (at protein level). Widely expressed at similar levels in all tissues examined. Expressed in the testis. In terms of tissue distribution, predominantly expressed in stomach although they are also detected at lower levels in other tissues. Expressed in the testis. As to expression, stomach-specific. Expressed at slightly higher levels in lung and stomach than in other tissues.

It is found in the apical cell membrane. The protein resides in the basolateral cell membrane. The enzyme catalyses hydrogencarbonate(in) + chloride(out) = hydrogencarbonate(out) + chloride(in). Inhibited by 4,4'-diisothiocyanatostilbene-2,2'-disulfonic acid (DIDS) and acetazolamide. Muscarinic receptor stimulation enhances activity through a Ca(2+)-dependent mechanism. Functionally, sodium-independent anion exchanger which mediates the electroneutral exchange of chloride for bicarbonate ions across the cell membrane. Plays an important role in osteoclast differentiation and function. Regulates bone resorption and calpain-dependent actin cytoskeleton organization in osteoclasts via anion exchange-dependent control of pH. Essential for intracellular pH regulation in CD8(+) T-cells upon CD3 stimulation, modulating CD8(+) T-cell responses. In terms of biological role, plays a critical role in male fertility and spermiogenesis. The polypeptide is Anion exchange protein 2 (Slc4a2) (Mus musculus (Mouse)).